An 82-amino-acid polypeptide reads, in one-letter code: Sec-independent protein translocase protein TatA (82 aa).

The chain crosses the membrane as a helical span at residues 1–21; the sequence is MGGISIWQLLIIAVIIVLLFG. The disordered stretch occupies residues 48-82; it reads SAKDAKKDADFVPQNLEKKEAETVEKQKQNDKEQA.

It belongs to the TatA/E family. In terms of assembly, the Tat system comprises two distinct complexes: a TatABC complex, containing multiple copies of TatA, TatB and TatC subunits, and a separate TatA complex, containing only TatA subunits. Substrates initially bind to the TatABC complex, which probably triggers association of the separate TatA complex to form the active translocon.

The protein localises to the cell inner membrane. In terms of biological role, part of the twin-arginine translocation (Tat) system that transports large folded proteins containing a characteristic twin-arginine motif in their signal peptide across membranes. TatA could form the protein-conducting channel of the Tat system. This chain is Sec-independent protein translocase protein TatA, found in Aliivibrio salmonicida (strain LFI1238) (Vibrio salmonicida (strain LFI1238)).